We begin with the raw amino-acid sequence, 143 residues long: Large ribosomal subunit protein uL13 (143 aa).

This sequence belongs to the universal ribosomal protein uL13 family. Part of the 50S ribosomal subunit.

In terms of biological role, this protein is one of the early assembly proteins of the 50S ribosomal subunit, although it is not seen to bind rRNA by itself. It is important during the early stages of 50S assembly. The protein is Large ribosomal subunit protein uL13 of Dehalococcoides mccartyi (strain ATCC BAA-2100 / JCM 16839 / KCTC 5957 / BAV1).